The chain runs to 323 residues: Penicillopepsin-1 (323 aa).

Serine 3 carries O-linked (Man...) serine glycosylation. O-linked (Man...) threonine glycosylation is present at threonine 7. Residues 17 to 320 enclose the Peptidase A1 domain; the sequence is YITPVTIGGT…DSDGPQLGFA (304 aa). Active-site residues include aspartate 33 and aspartate 213. Cysteine 249 and cysteine 283 are joined by a disulfide.

The protein belongs to the peptidase A1 family. In terms of assembly, monomer.

It is found in the secreted. The catalysed reaction is Hydrolysis of proteins with broad specificity similar to that of pepsin A, preferring hydrophobic residues at P1 and P1', but also cleaving 20-Gly-|-Glu-21 in the B chain of insulin. Clots milk, and activates trypsinogen.. In terms of biological role, secreted aspartic endopeptidase that allows assimilation of proteinaceous substrates. The scissile peptide bond is attacked by a nucleophilic water molecule activated by two aspartic residues in the active site. Shows a broad primary substrate specificity. Favors hydrophobic residues at the P1 and P1' positions, but can also activate trypsinogen and hydrolyze the B chain of insulin between positions 'Gly-20' and 'Glu-21'. This is Penicillopepsin-1 from Penicillium janthinellum (Penicillium vitale).